The chain runs to 83 residues: MYB-like transcription factor ETC1 (83 aa).

In terms of domain architecture, Myb-like spans 35–72 (AQEEEDLICRMYKLVGERWDLIAGRIPGRTAEEIERFW).

As to expression, expressed in developing trichomes and non-root hair cells.

Its subcellular location is the nucleus. MYB-type transcription factor involved in epidermal cell fate specification. Acts as a negative regulator of trichome development, by mediating lateral inhibition. Promotes the formation of hair developing cells in H position in root epidermis, probably by inhibiting non-hair cell formation. The polypeptide is MYB-like transcription factor ETC1 (ETC1) (Arabidopsis thaliana (Mouse-ear cress)).